We begin with the raw amino-acid sequence, 318 residues long: tRNA-cytidine(32) 2-sulfurtransferase (318 aa).

Residues 52–57 carry the PP-loop motif motif; sequence SGGKDS. [4Fe-4S] cluster contacts are provided by Cys127, Cys130, and Cys218.

It belongs to the TtcA family. As to quaternary structure, homodimer. Mg(2+) is required as a cofactor. [4Fe-4S] cluster serves as cofactor.

Its subcellular location is the cytoplasm. The catalysed reaction is cytidine(32) in tRNA + S-sulfanyl-L-cysteinyl-[cysteine desulfurase] + AH2 + ATP = 2-thiocytidine(32) in tRNA + L-cysteinyl-[cysteine desulfurase] + A + AMP + diphosphate + H(+). It functions in the pathway tRNA modification. Its function is as follows. Catalyzes the ATP-dependent 2-thiolation of cytidine in position 32 of tRNA, to form 2-thiocytidine (s(2)C32). The sulfur atoms are provided by the cysteine/cysteine desulfurase (IscS) system. In Actinobacillus pleuropneumoniae serotype 3 (strain JL03), this protein is tRNA-cytidine(32) 2-sulfurtransferase.